The primary structure comprises 268 residues: Ribosomal RNA small subunit methyltransferase A (268 aa).

The S-adenosyl-L-methionine site is built by Asn23, Ile25, Gly50, Glu72, Asp97, and Asn116.

It belongs to the class I-like SAM-binding methyltransferase superfamily. rRNA adenine N(6)-methyltransferase family. RsmA subfamily.

It is found in the cytoplasm. The enzyme catalyses adenosine(1518)/adenosine(1519) in 16S rRNA + 4 S-adenosyl-L-methionine = N(6)-dimethyladenosine(1518)/N(6)-dimethyladenosine(1519) in 16S rRNA + 4 S-adenosyl-L-homocysteine + 4 H(+). Functionally, specifically dimethylates two adjacent adenosines (A1518 and A1519) in the loop of a conserved hairpin near the 3'-end of 16S rRNA in the 30S particle. May play a critical role in biogenesis of 30S subunits. This chain is Ribosomal RNA small subunit methyltransferase A, found in Rickettsia bellii (strain OSU 85-389).